The sequence spans 586 residues: Transmembrane protease serine 13 (586 aa).

2 disordered regions span residues 1–115 and 131–157; these read MERD…VTTS and PIRS…LPKF. Residues 1–165 lie on the Cytoplasmic side of the membrane; that stretch reads MERDSHGNAS…KFTWREGQKQ (165 aa). The stretch at 9-13 is one 1-1 repeat; it reads ASPAR. Residues 9 to 93 form a 13 X 5 AA repeats of A-S-P-A-[GLQR] region; sequence ASPARTPSAG…ASPARASPAL (85 aa). The stretch at 14–18 is one 2-1; approximate repeat; that stretch reads TPSAG. Residues 14–52 are compositionally biased toward low complexity; it reads TPSAGASPAQASPAGTPPGRASPAQASPAQASPAGTPPG. The tract at residues 14–68 is 4 X 5 AA repeats of T-P-P-G-R; the sequence is TPSAGASPAQASPAGTPPGRASPAQASPAQASPAGTPPGRASPAQASPAGTPPGR. Tandem repeats lie at residues 19–23, 24–28, 29–33, 34–38, 39–43, 44–48, 49–53, 54–58, 59–63, and 64–68. One copy of the 1-9; approximate repeat lies at 69–78; the sequence is ASPGRASPAQ. 2 stretches are compositionally biased toward low complexity: residues 69–111 and 133–144; these read ASPG…RSAS and RSSPARSAPATR. 3 consecutive repeat copies span residues 79 to 83, 84 to 88, and 89 to 93. Residues 166–186 form a helical; Signal-anchor for type II membrane protein membrane-spanning segment; the sequence is LPLIGCVLLLIALVVSLIILF. Residues 187–586 lie on the Extracellular side of the membrane; it reads QFWQGHTGIR…GGDPGGAPRL (400 aa). Residues 195–325 enclose the SRCR domain; the sequence is IRYKEQRESC…HCGLRAMTGR (131 aa). One can recognise an LDL-receptor class A domain in the interval 204 to 226; the sequence is CPKHAVRCDGVVDCKLKSDELGC. 3 disulfides stabilise this stretch: cysteine 250–cysteine 314, cysteine 263–cysteine 317, and cysteine 351–cysteine 367. N-linked (GlcNAc...) asparagine glycans are attached at residues asparagine 255 and asparagine 292. The Peptidase S1 domain maps to 326 to 559; the sequence is IVGGALASDS…VLPWIYSKME (234 aa). The active-site Charge relay system is histidine 366. N-linked (GlcNAc...) asparagine glycosylation is present at asparagine 405. The active-site Charge relay system is aspartate 414. N-linked (GlcNAc...) asparagine glycosylation is present at asparagine 445. 3 cysteine pairs are disulfide-bonded: cysteine 448–cysteine 517, cysteine 480–cysteine 496, and cysteine 507–cysteine 535. The active-site Charge relay system is serine 511. Polar residues predominate over residues 565 to 574; the sequence is QDTAPSRLGT. The segment at 565 to 586 is disordered; the sequence is QDTAPSRLGTSSGGDPGGAPRL. Positions 575–586 are enriched in gly residues; it reads SSGGDPGGAPRL.

This sequence belongs to the peptidase S1 family. As to quaternary structure, interacts with SPINT1/HAI-1; the interaction promotes the phosphorylation and cell membrane localization of TMPRSS13. Interacts with SPINT2/HAI-2; the interaction promotes the phosphorylation and cell membrane localization of TMPRSS13. Post-translationally, the inactive zymogen is post-translationally modified and then trafficked to the cell surface, whereby it undergoes autocatalytic cleavage resulting in an activated form that is released extracellularly. Phosphorylation is required for localization at the cell surface. Phosphorylation increases following inhibition of protease activity by SPINT2/HAI-2. In terms of processing, N-glycosylation of Asn-405 and Asn-445 is required for exit from the endoplasmic reticulum and trafficking to the cell surface. Also required for autocleavage of the zymogen, activation and secretion of the mature protein. In terms of tissue distribution, expressed in placenta. Predominantly expressed in lung, placenta, pancreas, and prostate. As to expression, expressed in lung, placenta, pancreas, and prostate. Weakly expressed in testis and peripheral blood lymphocytes.

Its subcellular location is the cell membrane. The protein resides in the secreted. The protein localises to the cytoplasm. Its activity is regulated as follows. Cleavage of HGF is inhibited by SPINT1/HAI-1 via the BPTI/Kunitz inhibitor 1 domain. Serine protease. Cleaves the proform of PRSS8/prostasin to form the active protein. Cleaves the proform of HGF to form the active protein which promotes MAPK signaling. Promotes the formation of the stratum corneum and subsequently the epidermal barrier in embryos. The sequence is that of Transmembrane protease serine 13 (TMPRSS13) from Homo sapiens (Human).